Consider the following 197-residue polypeptide: Small ribosomal subunit protein uS4B (197 aa).

Residues 88-153 (CRLDNMVYRM…IEKYLSNLKN (66 aa)) form the S4 RNA-binding domain.

The protein belongs to the universal ribosomal protein uS4 family. In terms of assembly, part of the 30S ribosomal subunit. Contacts protein S5. The interaction surface between S4 and S5 is involved in control of translational fidelity.

Its function is as follows. One of the primary rRNA binding proteins, it binds directly to 16S rRNA where it nucleates assembly of the body of the 30S subunit. With S5 and S12 plays an important role in translational accuracy. This is Small ribosomal subunit protein uS4B from Alkaliphilus oremlandii (strain OhILAs) (Clostridium oremlandii (strain OhILAs)).